A 201-amino-acid chain; its full sequence is 3-isopropylmalate dehydratase small subunit (201 aa).

Belongs to the LeuD family. LeuD type 1 subfamily. As to quaternary structure, heterodimer of LeuC and LeuD.

It catalyses the reaction (2R,3S)-3-isopropylmalate = (2S)-2-isopropylmalate. Its pathway is amino-acid biosynthesis; L-leucine biosynthesis; L-leucine from 3-methyl-2-oxobutanoate: step 2/4. Catalyzes the isomerization between 2-isopropylmalate and 3-isopropylmalate, via the formation of 2-isopropylmaleate. The protein is 3-isopropylmalate dehydratase small subunit of Cytophaga hutchinsonii (strain ATCC 33406 / DSM 1761 / CIP 103989 / NBRC 15051 / NCIMB 9469 / D465).